The following is a 387-amino-acid chain: Succinate--CoA ligase [ADP-forming] subunit beta (387 aa).

Residues 9–236 (KGLFAKHNVP…RAATDPLELK (228 aa)) enclose the ATP-grasp domain. Residues lysine 45, 52 to 54 (GRG), serine 94, and glutamate 99 contribute to the ATP site. The Mg(2+) site is built by asparagine 191 and aspartate 205. Substrate contacts are provided by residues asparagine 256 and 318–320 (GIT).

The protein belongs to the succinate/malate CoA ligase beta subunit family. In terms of assembly, heterotetramer of two alpha and two beta subunits. Requires Mg(2+) as cofactor.

The catalysed reaction is succinate + ATP + CoA = succinyl-CoA + ADP + phosphate. It catalyses the reaction GTP + succinate + CoA = succinyl-CoA + GDP + phosphate. It participates in carbohydrate metabolism; tricarboxylic acid cycle; succinate from succinyl-CoA (ligase route): step 1/1. Functionally, succinyl-CoA synthetase functions in the citric acid cycle (TCA), coupling the hydrolysis of succinyl-CoA to the synthesis of either ATP or GTP and thus represents the only step of substrate-level phosphorylation in the TCA. The beta subunit provides nucleotide specificity of the enzyme and binds the substrate succinate, while the binding sites for coenzyme A and phosphate are found in the alpha subunit. The chain is Succinate--CoA ligase [ADP-forming] subunit beta from Mycobacterium ulcerans (strain Agy99).